The following is a 200-amino-acid chain: Recombination protein RecR (200 aa).

Residues C57–C72 form a C4-type zinc finger. The Toprim domain maps to G81–P176.

Belongs to the RecR family.

In terms of biological role, may play a role in DNA repair. It seems to be involved in an RecBC-independent recombinational process of DNA repair. It may act with RecF and RecO. This Aeromonas hydrophila subsp. hydrophila (strain ATCC 7966 / DSM 30187 / BCRC 13018 / CCUG 14551 / JCM 1027 / KCTC 2358 / NCIMB 9240 / NCTC 8049) protein is Recombination protein RecR.